Reading from the N-terminus, the 117-residue chain is Large ribosomal subunit protein bL20 (117 aa).

It belongs to the bacterial ribosomal protein bL20 family.

Binds directly to 23S ribosomal RNA and is necessary for the in vitro assembly process of the 50S ribosomal subunit. It is not involved in the protein synthesizing functions of that subunit. In Mesomycoplasma hyopneumoniae (strain J / ATCC 25934 / NCTC 10110) (Mycoplasma hyopneumoniae), this protein is Large ribosomal subunit protein bL20.